We begin with the raw amino-acid sequence, 116 residues long: S-adenosylmethionine decarboxylase proenzyme (116 aa).

The active-site Schiff-base intermediate with substrate; via pyruvic acid is the serine 63. Serine 63 carries the post-translational modification Pyruvic acid (Ser); by autocatalysis. Residue histidine 68 is the Proton acceptor; for processing activity of the active site. The Proton donor; for catalytic activity role is filled by cysteine 83.

It belongs to the prokaryotic AdoMetDC family. Type 1 subfamily. In terms of assembly, heterotetramer of two alpha and two beta chains arranged as a dimer of alpha/beta heterodimers. Pyruvate is required as a cofactor. In terms of processing, is synthesized initially as an inactive proenzyme. Formation of the active enzyme involves a self-maturation process in which the active site pyruvoyl group is generated from an internal serine residue via an autocatalytic post-translational modification. Two non-identical subunits are generated from the proenzyme in this reaction, and the pyruvate is formed at the N-terminus of the alpha chain, which is derived from the carboxyl end of the proenzyme. The post-translation cleavage follows an unusual pathway, termed non-hydrolytic serinolysis, in which the side chain hydroxyl group of the serine supplies its oxygen atom to form the C-terminus of the beta chain, while the remainder of the serine residue undergoes an oxidative deamination to produce ammonia and the pyruvoyl group blocking the N-terminus of the alpha chain.

The enzyme catalyses S-adenosyl-L-methionine + H(+) = S-adenosyl 3-(methylsulfanyl)propylamine + CO2. Its pathway is amine and polyamine biosynthesis; S-adenosylmethioninamine biosynthesis; S-adenosylmethioninamine from S-adenosyl-L-methionine: step 1/1. Its function is as follows. Catalyzes the decarboxylation of S-adenosylmethionine to S-adenosylmethioninamine (dcAdoMet), the propylamine donor required for the synthesis of the polyamines spermine and spermidine from the diamine putrescine. The sequence is that of S-adenosylmethionine decarboxylase proenzyme from Clostridium botulinum (strain Okra / Type B1).